Reading from the N-terminus, the 217-residue chain is Vesicle-associated membrane protein 723 (217 aa).

The Cytoplasmic portion of the chain corresponds to 1 to 192 (MAQQSLFYSF…KWFQNMKIKL (192 aa)). The Longin domain occupies 10-114 (FIARGTVILV…SLNKEFGSNL (105 aa)). One can recognise a v-SNARE coiled-coil homology domain in the interval 130–186 (NLAKAKAQVSEVKSLMMENIEKVLARGVICEMLGSSESQPQAFYIKRTQMKRKKWFQ). A helical; Anchor for type IV membrane protein membrane pass occupies residues 193–213 (IVLAIIIALILIIILSVCGGF). At 214 to 217 (NCGK) the chain is on the vesicular side.

The protein belongs to the synaptobrevin family. In terms of tissue distribution, highly expressed in stems and roots. Detected in flowers and leaves.

The protein localises to the endoplasmic reticulum membrane. Its function is as follows. Involved in the targeting and/or fusion of transport vesicles to their target membrane. In Arabidopsis thaliana (Mouse-ear cress), this protein is Vesicle-associated membrane protein 723.